A 523-amino-acid polypeptide reads, in one-letter code: AarF domain-containing protein kinase 1 (523 aa).

The region spanning 148–484 (EFEEKPLGAA…SLWSYIHISL (337 aa)) is the Protein kinase domain. Residues 154–162 (LGAASLAQV) and K176 each bind ATP. Residue D308 is the Proton acceptor of the active site.

The protein belongs to the protein kinase superfamily. ADCK protein kinase family.

It localises to the mitochondrion. Appears to be essential for maintaining mitochondrial cristae formation and mitochondrial function by acting via YME1L1 in a kinase-independent manner to regulate essential mitochondrial structural proteins OPA1 and IMMT. The action of this enzyme is not yet clear. It is not known if it has protein kinase activity and what type of substrate it would phosphorylate (Ser, Thr or Tyr). This Xenopus tropicalis (Western clawed frog) protein is AarF domain-containing protein kinase 1 (adck1).